Here is a 208-residue protein sequence, read N- to C-terminus: Large ribosomal subunit protein uL3 (208 aa).

Residue Gln-149 is modified to N5-methylglutamine.

This sequence belongs to the universal ribosomal protein uL3 family. As to quaternary structure, part of the 50S ribosomal subunit. Forms a cluster with proteins L14 and L19. Methylated by PrmB.

Functionally, one of the primary rRNA binding proteins, it binds directly near the 3'-end of the 23S rRNA, where it nucleates assembly of the 50S subunit. This Haemophilus influenzae (strain PittGG) protein is Large ribosomal subunit protein uL3.